The sequence spans 457 residues: Ribosomal protein uS12 methylthiotransferase RimO (457 aa).

The 111-residue stretch at P6–P116 folds into the MTTase N-terminal domain. [4Fe-4S] cluster contacts are provided by C15, C51, C80, C147, C151, and C154. In terms of domain architecture, Radical SAM core spans L133–A370. Positions E373 to P441 constitute a TRAM domain.

This sequence belongs to the methylthiotransferase family. RimO subfamily. [4Fe-4S] cluster is required as a cofactor.

It localises to the cytoplasm. The enzyme catalyses L-aspartate(89)-[ribosomal protein uS12]-hydrogen + (sulfur carrier)-SH + AH2 + 2 S-adenosyl-L-methionine = 3-methylsulfanyl-L-aspartate(89)-[ribosomal protein uS12]-hydrogen + (sulfur carrier)-H + 5'-deoxyadenosine + L-methionine + A + S-adenosyl-L-homocysteine + 2 H(+). Its function is as follows. Catalyzes the methylthiolation of an aspartic acid residue of ribosomal protein uS12. This is Ribosomal protein uS12 methylthiotransferase RimO from Xanthomonas campestris pv. campestris (strain 8004).